We begin with the raw amino-acid sequence, 950 residues long: Glycine dehydrogenase (decarboxylating) 1 (950 aa).

Position 704 is an N6-(pyridoxal phosphate)lysine (Lys704).

The protein belongs to the GcvP family. In terms of assembly, the glycine cleavage system is composed of four proteins: P, T, L and H. Requires pyridoxal 5'-phosphate as cofactor.

It carries out the reaction N(6)-[(R)-lipoyl]-L-lysyl-[glycine-cleavage complex H protein] + glycine + H(+) = N(6)-[(R)-S(8)-aminomethyldihydrolipoyl]-L-lysyl-[glycine-cleavage complex H protein] + CO2. The glycine cleavage system catalyzes the degradation of glycine. The P protein binds the alpha-amino group of glycine through its pyridoxal phosphate cofactor; CO(2) is released and the remaining methylamine moiety is then transferred to the lipoamide cofactor of the H protein. In Pseudomonas fluorescens (strain Pf0-1), this protein is Glycine dehydrogenase (decarboxylating) 1.